The sequence spans 150 residues: UPF0098 protein CT_736 (150 aa).

It belongs to the UPF0098 family.

The sequence is that of UPF0098 protein CT_736 from Chlamydia trachomatis serovar D (strain ATCC VR-885 / DSM 19411 / UW-3/Cx).